The sequence spans 21 residues: Nigrocin-2JDa (21 aa).

Cysteine 15 and cysteine 21 are oxidised to a cystine.

As to expression, expressed by the skin glands.

The protein resides in the secreted. Its function is as follows. Has antibacterial activity against E.coli ATCC 25992 (MIC=16 uM), E.coli CIB 84492 (MIC=16 uM), S.aureus ATCC 25923 (MIC=16 uM) and S.aureus CIB 85462 (MIC=8 uM). Has antifungal activity against C.albicans (MIC=63 uM). Has hemolytic activity against rabbit erythrocytes. The sequence is that of Nigrocin-2JDa from Odorrana jingdongensis (Jingdong frog).